Here is a 390-residue protein sequence, read N- to C-terminus: Homoserine O-succinyltransferase (390 aa).

The AB hydrolase-1 domain occupies 59 to 369; the sequence is NAVLVCHALN…PHGHDAFLLD (311 aa). The active-site Nucleophile is the serine 165. Residue arginine 235 coordinates substrate. Residues aspartate 330 and histidine 363 contribute to the active site. Aspartate 364 contacts substrate.

Belongs to the AB hydrolase superfamily. MetX family. In terms of assembly, homodimer.

It is found in the cytoplasm. It catalyses the reaction L-homoserine + succinyl-CoA = O-succinyl-L-homoserine + CoA. The protein operates within amino-acid biosynthesis; L-methionine biosynthesis via de novo pathway; O-succinyl-L-homoserine from L-homoserine: step 1/1. In terms of biological role, transfers a succinyl group from succinyl-CoA to L-homoserine, forming succinyl-L-homoserine. The chain is Homoserine O-succinyltransferase from Cupriavidus pinatubonensis (strain JMP 134 / LMG 1197) (Cupriavidus necator (strain JMP 134)).